The following is a 311-amino-acid chain: Homoserine kinase (311 aa).

88 to 98 lines the ATP pocket; that stretch reads PEGLGLGSSGA.

Belongs to the GHMP kinase family. Homoserine kinase subfamily.

The protein localises to the cytoplasm. It catalyses the reaction L-homoserine + ATP = O-phospho-L-homoserine + ADP + H(+). The protein operates within amino-acid biosynthesis; L-threonine biosynthesis; L-threonine from L-aspartate: step 4/5. Its function is as follows. Catalyzes the ATP-dependent phosphorylation of L-homoserine to L-homoserine phosphate. The polypeptide is Homoserine kinase (Saccharolobus islandicus (strain Y.N.15.51 / Yellowstone #2) (Sulfolobus islandicus)).